A 334-amino-acid polypeptide reads, in one-letter code: Nucleoid-associated protein ESA_01050 (334 aa).

Belongs to the YejK family.

Its subcellular location is the cytoplasm. It is found in the nucleoid. The polypeptide is Nucleoid-associated protein ESA_01050 (Cronobacter sakazakii (strain ATCC BAA-894) (Enterobacter sakazakii)).